We begin with the raw amino-acid sequence, 176 residues long: Large ribosomal subunit protein uL10 (176 aa).

It belongs to the universal ribosomal protein uL10 family. Part of the ribosomal stalk of the 50S ribosomal subunit. The N-terminus interacts with L11 and the large rRNA to form the base of the stalk. The C-terminus forms an elongated spine to which L12 dimers bind in a sequential fashion forming a multimeric L10(L12)X complex.

Functionally, forms part of the ribosomal stalk, playing a central role in the interaction of the ribosome with GTP-bound translation factors. The sequence is that of Large ribosomal subunit protein uL10 from Hahella chejuensis (strain KCTC 2396).